The following is a 318-amino-acid chain: Olfactory receptor 56A1 (318 aa).

The Extracellular portion of the chain corresponds to 1 to 32 (MIQPMASPSNSSTVPVSEFLLICFPNFQSWQH). Asparagine 10 carries an N-linked (GlcNAc...) asparagine glycan. The chain crosses the membrane as a helical span at residues 33 to 53 (WLSLPLSLLFLLAMGANTTLL). Topologically, residues 54 to 61 (ITIQLEAS) are cytoplasmic. A helical membrane pass occupies residues 62–82 (LHQPLYYLLSLLSLLDIVLCL). The Extracellular portion of the chain corresponds to 83–106 (TVIPKVLAIFWYDLRSISFPACFL). A disulfide bridge connects residues cysteine 104 and cysteine 196. Residues 107–127 (QMFIMNSFLPMESCTFMVMAY) form a helical membrane-spanning segment. At 128–146 (DRYVAICHPLRYPSIITNQ) the chain is on the cytoplasmic side. Residues 147 to 167 (FVAKASVFIVVRNALLTAPIP) form a helical membrane-spanning segment. Over 168 to 203 (ILTSLLHYCGENVIENCICANLSVSRLSCDNFTLNR) the chain is Extracellular. Asparagine 188 and asparagine 198 each carry an N-linked (GlcNAc...) asparagine glycan. The chain crosses the membrane as a helical span at residues 204–224 (IYQFVAGWTLLGSDLFLIFLS). The Cytoplasmic portion of the chain corresponds to 225–244 (YTFILRAVLRFKAEGAAVKA). Residues 245–265 (LSTCGSHFILILFFSTILLVV) traverse the membrane as a helical segment. Over 266–280 (VLTNVARKKVPMDIL) the chain is Extracellular. A helical transmembrane segment spans residues 281–301 (ILLNVLHHLIPPALNPIVYGV). At 302–318 (RTKEIKQGIQKLLQRGR) the chain is on the cytoplasmic side.

The protein belongs to the G-protein coupled receptor 1 family.

Its subcellular location is the cell membrane. In terms of biological role, odorant receptor. The chain is Olfactory receptor 56A1 (OR56A1) from Homo sapiens (Human).